We begin with the raw amino-acid sequence, 983 residues long: Nitrate reductase [NADPH] (983 aa).

Composition is skewed to low complexity over residues 1 to 14 and 26 to 48; these read MTIS…SSKT and SSSS…SSPT. The disordered stretch occupies residues 1 to 50; that stretch reads MTISTTSSSTSSKTSSEKGDDLKGFSSSSSPASSRSSSATTPEPSSPTVL. Cysteine 184 is a binding site for Mo-molybdopterin. The region spanning 585-662 is the Cytochrome b5 heme-binding domain; the sequence is DTIITAADLA…LRDFHLGRLE (78 aa). Heme contacts are provided by histidine 622 and histidine 645. Residues 688 to 815 form the FAD-binding FR-type domain; it reads KKWRATRLVS…KGPLGSFTYL (128 aa). FAD-binding positions include 746–749, 763–767, phenylalanine 768, phenylalanine 780, 784–786, serine 841, and threonine 844; these read RAYT, LIKVY, and KMT. 952 to 961 provides a ligand contact to NADP(+); that stretch reads LALVCGPPPM.

This sequence belongs to the nitrate reductase family. In terms of assembly, homodimer. It depends on FAD as a cofactor. Requires heme as cofactor. The cofactor is Mo-molybdopterin.

The enzyme catalyses nitrite + NADP(+) + H2O = nitrate + NADPH + H(+). It participates in nitrogen metabolism; nitrate reduction (assimilation). Its function is as follows. Nitrate reductase is a key enzyme involved in the first step of nitrate assimilation in plants, fungi and bacteria. The polypeptide is Nitrate reductase [NADPH] (NAR1) (Mycosarcoma maydis (Corn smut fungus)).